The following is a 320-amino-acid chain: Cytochrome f (320 aa).

The N-terminal stretch at 1–35 is a signal peptide; it reads MQTRKTFSWIKEEITRSISVLLMIYIITWASISNA. Heme-binding residues include Tyr-36, Cys-56, Cys-59, and His-60. The helical transmembrane segment at 286-306 threads the bilayer; that stretch reads VQGLLFFLASVILAQIFLVLK.

Belongs to the cytochrome f family. The 4 large subunits of the cytochrome b6-f complex are cytochrome b6, subunit IV (17 kDa polypeptide, petD), cytochrome f and the Rieske protein, while the 4 small subunits are PetG, PetL, PetM and PetN. The complex functions as a dimer. Heme is required as a cofactor.

The protein localises to the plastid. It is found in the chloroplast thylakoid membrane. Its function is as follows. Component of the cytochrome b6-f complex, which mediates electron transfer between photosystem II (PSII) and photosystem I (PSI), cyclic electron flow around PSI, and state transitions. The protein is Cytochrome f of Manihot esculenta (Cassava).